We begin with the raw amino-acid sequence, 380 residues long: uncharacterized protein (380 aa).

A signal peptide spans 1–28 (MQFLSDTQRMVLSRAVCASFFFFHVAVA). In terms of domain architecture, SPOR spans 307–380 (AGDEKPRGYQ…DAGYETFPLF (74 aa)).

This is an uncharacterized protein from Treponema pallidum (strain Nichols).